We begin with the raw amino-acid sequence, 727 residues long: MAQHTAAAAGGDEEVAEAEAAAAAAAGSTLRHRHAGKGAEEHEAAGGGGGGRNGGADDPDATSVERVFADKAVPSWREQLTLRAFVVSALLAVMFSVIVMKLNLTTGIIPSLNVSAGLLGFFFVRLWTSAVERIGLLKQPFTRQENTVIQTCVVSAYGIAFSGGFGSYLFGMSETIAKQATEAKDAQNIKDPHLGWMIGFLFLVSFIGLFALVPLRKIMIVDYKLTYPSGTATAYLINGFHTPEGAKLAKKQVKTLGKYFLFSFFWGFFQWFYTAGDDCGFKNFPTLGLEAYNNRFFFDFSPTYVGVGMICPYIVNVSVLLGGILSWGVMWPLIAKKKGSWYPADISDNSLHGLQAYRVFISIALILGDGLYNFLKVLIRTIAGFISMVQNNSKGMLPVSDNGMSMSTAEEVSFDDERRTEIFLKDQIPKSVAYGGYVVVAALSIGTLPEIFPQLKWYYILVAYIVAPVLAFCNAYGSGLTDWSLASTYGKLAIFVFGAWAGLSHGGVLVGLAACGVMMSIVSTASDLMQDFKTGYLTLASPRSMFISQVIGTGMGCVIAPCVFWLFYKAFSNIGTSGTEYPAPYAIVYRNMAILGVDGFNSLPENCLTLCYIFFAAAIAINLIRDLAPHKVSRFIPLPMAMAIPFYIGSYFAIDMFLGSVILFVWEKLNKAKADAFGPAVASGLICGDGIWTLPQSILALAKVKPPICMKFLSRAANAKVDSFLAG.

Low complexity-rich tracts occupy residues 1–10 and 18–27; these read MAQHTAAAAG and AEAAAAAAAG. A disordered region spans residues 1-61; sequence MAQHTAAAAG…RNGGADDPDA (61 aa). The span at 45–54 shows a compositional bias: gly residues; it reads AGGGGGGRNG. The next 14 helical transmembrane spans lie at 84–104, 107–127, 152–172, 194–214, 256–276, 314–334, 359–379, 432–452, 460–480, 492–512, 546–566, 604–624, 646–666, and 681–701; these read AFVV…KLNL, GIIP…VRLW, CVVS…LFGM, LGWM…ALVP, LGKY…YTAG, IVNV…WPLI, VFIS…KVLI, VAYG…PEIF, ILVA…GSGL, LAIF…LVGL, FISQ…VFWL, PENC…INLI, FYIG…LFVW, and VASG…ILAL.

It belongs to the YSL (TC 2.A.67.2) family. In terms of tissue distribution, expressed in leaves and at low levels in roots.

It localises to the membrane. May be involved in the transport of nicotianamine-chelated metals. In Oryza sativa subsp. japonica (Rice), this protein is Probable metal-nicotianamine transporter YSL14 (YSL14).